The following is a 346-amino-acid chain: Olfactory receptor 13D1 (346 aa).

Over 1-57 (MYRFTDFDVSNISIYLNHVLFYTTQQAGDLEHMETRNYSAMTEFFLVGLSQYPELQL) the chain is Extracellular. N37 carries an N-linked (GlcNAc...) asparagine glycan. The chain crosses the membrane as a helical span at residues 58-78 (FLFLLCLIMYMIILLGNSLLI). At 79-86 (IITILDSR) the chain is on the cytoplasmic side. Residues 87 to 107 (LHTPMYFFLGNLSFLDICYTS) form a helical membrane-spanning segment. Topologically, residues 108–131 (SSIPPMLIIFMSERKSISFIGCAL) are extracellular. C129 and C221 are joined by a disulfide. A helical membrane pass occupies residues 132-152 (QMVVSLGLGSTECVLLAVMAY). Residues 153–171 (DHYVAICNPLRYSIIMNGV) are Cytoplasmic-facing. Residues 172–192 (LYVQMAAWSWIIGCLTSLLQT) traverse the membrane as a helical segment. Residues 193 to 229 (VLTMMLPFCGNNVIDHITCEILALLKLVCSDITINVL) are Extracellular-facing. Residues 230-249 (IMTVTNIVSLVILLLLIFIS) traverse the membrane as a helical segment. The Cytoplasmic segment spans residues 250–269 (YVFILSSILRINCAEGRKKA). A helical membrane pass occupies residues 270–290 (FSTCSAHSIVVILFYGSALFM). Residues 291–303 (YMKPKSKNTNTSD) lie on the Extracellular side of the membrane. A glycan (N-linked (GlcNAc...) asparagine) is linked at N300. The helical transmembrane segment at 304 to 324 (EIIGLSYGVVSPMLNPIIYSL) threads the bilayer. Over 325–346 (RNKEVKEAVKKVLSRHLHLLKM) the chain is Cytoplasmic.

The protein belongs to the G-protein coupled receptor 1 family.

Its subcellular location is the cell membrane. In terms of biological role, odorant receptor. The polypeptide is Olfactory receptor 13D1 (OR13D1) (Homo sapiens (Human)).